The sequence spans 280 residues: UDP-3-O-acyl-N-acetylglucosamine deacetylase (280 aa).

The Zn(2+) site is built by histidine 79, histidine 237, and aspartate 241. Residue histidine 264 is the Proton donor of the active site.

It belongs to the LpxC family. Zn(2+) serves as cofactor.

The enzyme catalyses a UDP-3-O-[(3R)-3-hydroxyacyl]-N-acetyl-alpha-D-glucosamine + H2O = a UDP-3-O-[(3R)-3-hydroxyacyl]-alpha-D-glucosamine + acetate. Its pathway is glycolipid biosynthesis; lipid IV(A) biosynthesis; lipid IV(A) from (3R)-3-hydroxytetradecanoyl-[acyl-carrier-protein] and UDP-N-acetyl-alpha-D-glucosamine: step 2/6. In terms of biological role, catalyzes the hydrolysis of UDP-3-O-myristoyl-N-acetylglucosamine to form UDP-3-O-myristoylglucosamine and acetate, the committed step in lipid A biosynthesis. This Chlamydia abortus (strain DSM 27085 / S26/3) (Chlamydophila abortus) protein is UDP-3-O-acyl-N-acetylglucosamine deacetylase.